Consider the following 447-residue polypeptide: GTPase Der (447 aa).

EngA-type G domains lie at 4 to 165 (KIIT…SIKE) and 180 to 357 (LQIV…KIWN). GTP-binding positions include 10-17 (GRPNVGKS), 57-61 (DTPGL), 119-122 (NKCE), 186-193 (GRPNAGKS), 233-237 (DTAGL), and 298-301 (NKWD). In terms of domain architecture, KH-like spans 358–443 (KKITTGKLNE…PIRFTYVKNK (86 aa)).

This sequence belongs to the TRAFAC class TrmE-Era-EngA-EngB-Septin-like GTPase superfamily. EngA (Der) GTPase family. In terms of assembly, associates with the 50S ribosomal subunit.

In terms of biological role, GTPase that plays an essential role in the late steps of ribosome biogenesis. This chain is GTPase Der, found in Rickettsia typhi (strain ATCC VR-144 / Wilmington).